A 337-amino-acid polypeptide reads, in one-letter code: Holliday junction branch migration complex subunit RuvB (337 aa).

Positions 1-22 (MEDERITSAEVQSPDEENEELS) are disordered. Residues 1 to 184 (MEDERITSAE…FGIVEHMNYY (184 aa)) are large ATPase domain (RuvB-L). Residues Leu23, Arg24, Gly65, Lys68, Thr69, Thr70, 131–133 (EDF), Arg174, Tyr184, and Arg221 each bind ATP. Thr69 provides a ligand contact to Mg(2+). Residues 185–255 (NEADLANIVR…LVSQSLKLLQ (71 aa)) form a small ATPAse domain (RuvB-S) region. Positions 258–337 (NRGLDRTDKK…LGLIDQYMNK (80 aa)) are head domain (RuvB-H). DNA contacts are provided by Arg313 and Arg318.

The protein belongs to the RuvB family. As to quaternary structure, homohexamer. Forms an RuvA(8)-RuvB(12)-Holliday junction (HJ) complex. HJ DNA is sandwiched between 2 RuvA tetramers; dsDNA enters through RuvA and exits via RuvB. An RuvB hexamer assembles on each DNA strand where it exits the tetramer. Each RuvB hexamer is contacted by two RuvA subunits (via domain III) on 2 adjacent RuvB subunits; this complex drives branch migration. In the full resolvosome a probable DNA-RuvA(4)-RuvB(12)-RuvC(2) complex forms which resolves the HJ.

The protein resides in the cytoplasm. The catalysed reaction is ATP + H2O = ADP + phosphate + H(+). The RuvA-RuvB-RuvC complex processes Holliday junction (HJ) DNA during genetic recombination and DNA repair, while the RuvA-RuvB complex plays an important role in the rescue of blocked DNA replication forks via replication fork reversal (RFR). RuvA specifically binds to HJ cruciform DNA, conferring on it an open structure. The RuvB hexamer acts as an ATP-dependent pump, pulling dsDNA into and through the RuvAB complex. RuvB forms 2 homohexamers on either side of HJ DNA bound by 1 or 2 RuvA tetramers; 4 subunits per hexamer contact DNA at a time. Coordinated motions by a converter formed by DNA-disengaged RuvB subunits stimulates ATP hydrolysis and nucleotide exchange. Immobilization of the converter enables RuvB to convert the ATP-contained energy into a lever motion, pulling 2 nucleotides of DNA out of the RuvA tetramer per ATP hydrolyzed, thus driving DNA branch migration. The RuvB motors rotate together with the DNA substrate, which together with the progressing nucleotide cycle form the mechanistic basis for DNA recombination by continuous HJ branch migration. Branch migration allows RuvC to scan DNA until it finds its consensus sequence, where it cleaves and resolves cruciform DNA. The polypeptide is Holliday junction branch migration complex subunit RuvB (Pediococcus pentosaceus (strain ATCC 25745 / CCUG 21536 / LMG 10740 / 183-1w)).